Reading from the N-terminus, the 244-residue chain is Uracil phosphoribosyltransferase (244 aa).

Residues Lys59, Arg68, and 102 to 105 (YSKI) each bind GTP. Arg112 is a binding site for 5-phospho-alpha-D-ribose 1-diphosphate. Arg129 serves as a coordination point for GTP. A 5-phospho-alpha-D-ribose 1-diphosphate-binding site is contributed by Arg137. Arg158 is a GTP binding site. 5-phospho-alpha-D-ribose 1-diphosphate is bound by residues Asp164 and 164–172 (DPMCATAGS). Uracil-binding positions include Ile229 and 234 to 236 (GDF). Asp235 lines the 5-phospho-alpha-D-ribose 1-diphosphate pocket.

This sequence belongs to the UPRTase family. In terms of assembly, monomer. Forms homodimers in presence of substrates and homotetramers in the presence of GTP. Mg(2+) serves as cofactor.

The enzyme catalyses UMP + diphosphate = 5-phospho-alpha-D-ribose 1-diphosphate + uracil. Its pathway is pyrimidine metabolism; UMP biosynthesis via salvage pathway; UMP from uracil: step 1/1. With respect to regulation, allosterically activated by GTP. Binding of GTP leads to 5-time activation of the enzyme. Functionally, catalyzes the conversion of uracil and 5-phospho-alpha-D-ribose 1-diphosphate (PRPP) to UMP and diphosphate. In Toxoplasma gondii, this protein is Uracil phosphoribosyltransferase (uprt).